The sequence spans 394 residues: Elongation factor Tu (394 aa).

The tr-type G domain occupies 10-204 (KPHINIGTIG…AVDDNIPTPE (195 aa)). Residues 19–26 (GHVDHGKT) are G1. A GTP-binding site is contributed by 19–26 (GHVDHGKT). Thr-26 serves as a coordination point for Mg(2+). The G2 stretch occupies residues 60-64 (GITIN). The segment at 81 to 84 (DCPG) is G3. GTP contacts are provided by residues 81 to 85 (DCPGH) and 136 to 139 (NKID). Residues 136–139 (NKID) are G4. The tract at residues 174–176 (SAL) is G5.

It belongs to the TRAFAC class translation factor GTPase superfamily. Classic translation factor GTPase family. EF-Tu/EF-1A subfamily. In terms of assembly, monomer.

It is found in the cytoplasm. The enzyme catalyses GTP + H2O = GDP + phosphate + H(+). GTP hydrolase that promotes the GTP-dependent binding of aminoacyl-tRNA to the A-site of ribosomes during protein biosynthesis. The polypeptide is Elongation factor Tu (Chlamydia felis (strain Fe/C-56) (Chlamydophila felis)).